A 513-amino-acid chain; its full sequence is tRNA-2-methylthio-N(6)-dimethylallyladenosine synthase (513 aa).

One can recognise an MTTase N-terminal domain in the interval 67-185 (KTFLIKTYGC…LPEILEEAYL (119 aa)). [4Fe-4S] cluster-binding residues include Cys76, Cys112, Cys146, Cys222, Cys226, and Cys229. The region spanning 208-438 (REGNIKAWVN…NKKVACYSER (231 aa)) is the Radical SAM core domain. One can recognise a TRAM domain in the interval 441–504 (QQYEGQTVQV…QFSLNGTFIS (64 aa)).

It belongs to the methylthiotransferase family. MiaB subfamily. Monomer. [4Fe-4S] cluster serves as cofactor.

The protein resides in the cytoplasm. It carries out the reaction N(6)-dimethylallyladenosine(37) in tRNA + (sulfur carrier)-SH + AH2 + 2 S-adenosyl-L-methionine = 2-methylsulfanyl-N(6)-dimethylallyladenosine(37) in tRNA + (sulfur carrier)-H + 5'-deoxyadenosine + L-methionine + A + S-adenosyl-L-homocysteine + 2 H(+). Functionally, catalyzes the methylthiolation of N6-(dimethylallyl)adenosine (i(6)A), leading to the formation of 2-methylthio-N6-(dimethylallyl)adenosine (ms(2)i(6)A) at position 37 in tRNAs that read codons beginning with uridine. In Staphylococcus saprophyticus subsp. saprophyticus (strain ATCC 15305 / DSM 20229 / NCIMB 8711 / NCTC 7292 / S-41), this protein is tRNA-2-methylthio-N(6)-dimethylallyladenosine synthase.